Here is a 343-residue protein sequence, read N- to C-terminus: S-adenosylmethionine:tRNA ribosyltransferase-isomerase (343 aa).

This sequence belongs to the QueA family. Monomer.

It localises to the cytoplasm. It catalyses the reaction 7-aminomethyl-7-carbaguanosine(34) in tRNA + S-adenosyl-L-methionine = epoxyqueuosine(34) in tRNA + adenine + L-methionine + 2 H(+). It participates in tRNA modification; tRNA-queuosine biosynthesis. Its function is as follows. Transfers and isomerizes the ribose moiety from AdoMet to the 7-aminomethyl group of 7-deazaguanine (preQ1-tRNA) to give epoxyqueuosine (oQ-tRNA). The protein is S-adenosylmethionine:tRNA ribosyltransferase-isomerase of Coxiella burnetii (strain Dugway 5J108-111).